Reading from the N-terminus, the 685-residue chain is tRNA 5-methylaminomethyl-2-thiouridine biosynthesis bifunctional protein MnmC (685 aa).

The segment at 1–272 (MTAEPNKPCQ…MAAILSSATQ (272 aa)) is tRNA (mnm(5)s(2)U34)-methyltransferase. The interval 278–685 (IGGGLASAHL…LRKLLKGKAL (408 aa)) is FAD-dependent cmnm(5)s(2)U34 oxidoreductase.

It in the N-terminal section; belongs to the methyltransferase superfamily. tRNA (mnm(5)s(2)U34)-methyltransferase family. The protein in the C-terminal section; belongs to the DAO family. The cofactor is FAD.

It localises to the cytoplasm. The enzyme catalyses 5-aminomethyl-2-thiouridine(34) in tRNA + S-adenosyl-L-methionine = 5-methylaminomethyl-2-thiouridine(34) in tRNA + S-adenosyl-L-homocysteine + H(+). In terms of biological role, catalyzes the last two steps in the biosynthesis of 5-methylaminomethyl-2-thiouridine (mnm(5)s(2)U) at the wobble position (U34) in tRNA. Catalyzes the FAD-dependent demodification of cmnm(5)s(2)U34 to nm(5)s(2)U34, followed by the transfer of a methyl group from S-adenosyl-L-methionine to nm(5)s(2)U34, to form mnm(5)s(2)U34. This is tRNA 5-methylaminomethyl-2-thiouridine biosynthesis bifunctional protein MnmC from Shewanella baltica (strain OS185).